The primary structure comprises 291 residues: 33 kDa chaperonin (291 aa).

Disulfide bonds link Cys237/Cys239 and Cys270/Cys273.

It belongs to the HSP33 family. In terms of processing, under oxidizing conditions two disulfide bonds are formed involving the reactive cysteines. Under reducing conditions zinc is bound to the reactive cysteines and the protein is inactive.

The protein localises to the cytoplasm. In terms of biological role, redox regulated molecular chaperone. Protects both thermally unfolding and oxidatively damaged proteins from irreversible aggregation. Plays an important role in the bacterial defense system toward oxidative stress. This is 33 kDa chaperonin from Clostridioides difficile (strain 630) (Peptoclostridium difficile).